The primary structure comprises 497 residues: Acetyl-coenzyme A carboxylase carboxyl transferase subunit beta, chloroplastic (497 aa).

The region spanning 230 to 497 (LWIQCENCYG…FFPLNQNSIK (268 aa)) is the CoA carboxyltransferase N-terminal domain. C234, C237, C253, and C256 together coordinate Zn(2+). The segment at 234–256 (CENCYGLNYKKFFRSKMNICEQC) adopts a C4-type zinc-finger fold.

This sequence belongs to the AccD/PCCB family. In terms of assembly, acetyl-CoA carboxylase is a heterohexamer composed of biotin carboxyl carrier protein, biotin carboxylase and 2 subunits each of ACCase subunit alpha and ACCase plastid-coded subunit beta (accD). Zn(2+) serves as cofactor.

The protein resides in the plastid. It is found in the chloroplast stroma. The enzyme catalyses N(6)-carboxybiotinyl-L-lysyl-[protein] + acetyl-CoA = N(6)-biotinyl-L-lysyl-[protein] + malonyl-CoA. It functions in the pathway lipid metabolism; malonyl-CoA biosynthesis; malonyl-CoA from acetyl-CoA: step 1/1. Its function is as follows. Component of the acetyl coenzyme A carboxylase (ACC) complex. Biotin carboxylase (BC) catalyzes the carboxylation of biotin on its carrier protein (BCCP) and then the CO(2) group is transferred by the transcarboxylase to acetyl-CoA to form malonyl-CoA. This Platanus occidentalis (Sycamore) protein is Acetyl-coenzyme A carboxylase carboxyl transferase subunit beta, chloroplastic.